Reading from the N-terminus, the 496-residue chain is Cobyric acid synthase (496 aa).

Residues 252–442 enclose the GATase cobBQ-type domain; sequence DLAVAVIRLP…LHGCFDSDTY (191 aa). C333 functions as the Nucleophile in the catalytic mechanism. H434 is an active-site residue.

Belongs to the CobB/CobQ family. CobQ subfamily.

It participates in cofactor biosynthesis; adenosylcobalamin biosynthesis. In terms of biological role, catalyzes amidations at positions B, D, E, and G on adenosylcobyrinic A,C-diamide. NH(2) groups are provided by glutamine, and one molecule of ATP is hydrogenolyzed for each amidation. This chain is Cobyric acid synthase, found in Desulforudis audaxviator (strain MP104C).